A 212-amino-acid chain; its full sequence is External core antigen (212 aa).

The signal sequence occupies residues 1-19 (MQLFHLCLIISCSCPTVQA). Positions 25 to 27 (GWL) are HBEAG. The interval 165 to 212 (NAPILSTLPETTVVRRRGRSPRRRTPSPRRRRSQSPRRRRSQSRESQC) is disordered. Over residues 178–205 (VRRRGRSPRRRTPSPRRRRSQSPRRRRS) the composition is skewed to basic residues. The 1; half-length repeat unit spans residues 184-190 (SPRRRTP). The tract at residues 184–206 (SPRRRTPSPRRRRSQSPRRRRSQ) is 3 X 8 AA repeats of S-P-R-R-R-R-S-Q. Positions 184–212 (SPRRRTPSPRRRRSQSPRRRRSQSRESQC) are excised as a propeptide. Tandem repeats lie at residues 191 to 198 (SPRRRRSQ) and 199 to 206 (SPRRRRSQ).

It belongs to the orthohepadnavirus precore antigen family. Homodimerizes. Phosphorylated. In terms of processing, cleaved by host furin.

The protein resides in the secreted. It localises to the host nucleus. Its function is as follows. May regulate immune response to the intracellular capsid in acting as a T-cell tolerogen, by having an immunoregulatory effect which prevents destruction of infected cells by cytotoxic T-cells. This immune regulation may predispose to chronicity during perinatal infections and prevent severe liver injury during adult infections. This chain is External core antigen, found in Homo sapiens (Human).